We begin with the raw amino-acid sequence, 754 residues long: 5-methyltetrahydropteroyltriglutamate--homocysteine methyltransferase (754 aa).

Residues 17–20 (RELK) and K117 each bind 5-methyltetrahydropteroyltri-L-glutamate. Residues 431–433 (IGS) and E484 each bind L-homocysteine. L-methionine is bound by residues 431–433 (IGS) and E484. 5-methyltetrahydropteroyltri-L-glutamate-binding positions include 515–516 (RC) and W561. Residue D599 coordinates L-homocysteine. An L-methionine-binding site is contributed by D599. A 5-methyltetrahydropteroyltri-L-glutamate-binding site is contributed by E605. Positions 641, 643, and 665 each coordinate Zn(2+). H694 serves as the catalytic Proton donor. C726 contributes to the Zn(2+) binding site.

The protein belongs to the vitamin-B12 independent methionine synthase family. Zn(2+) serves as cofactor.

It carries out the reaction 5-methyltetrahydropteroyltri-L-glutamate + L-homocysteine = tetrahydropteroyltri-L-glutamate + L-methionine. The protein operates within amino-acid biosynthesis; L-methionine biosynthesis via de novo pathway; L-methionine from L-homocysteine (MetE route): step 1/1. Functionally, catalyzes the transfer of a methyl group from 5-methyltetrahydrofolate to homocysteine resulting in methionine formation. The polypeptide is 5-methyltetrahydropteroyltriglutamate--homocysteine methyltransferase (Salmonella newport (strain SL254)).